The following is a 540-amino-acid chain: T-complex protein 1 subunit alpha (540 aa).

It belongs to the TCP-1 chaperonin family. Component of the T-complex protein 1 (TCP1) complex.

The protein resides in the cytoplasm. Molecular chaperone; assists the folding of proteins upon ATP hydrolysis. This Encephalitozoon cuniculi (strain GB-M1) (Microsporidian parasite) protein is T-complex protein 1 subunit alpha (TCP1).